A 158-amino-acid polypeptide reads, in one-letter code: Endoribonuclease YbeY (158 aa).

Residues histidine 117, histidine 121, and histidine 127 each contribute to the Zn(2+) site.

The protein belongs to the endoribonuclease YbeY family. The cofactor is Zn(2+).

Its subcellular location is the cytoplasm. Single strand-specific metallo-endoribonuclease involved in late-stage 70S ribosome quality control and in maturation of the 3' terminus of the 16S rRNA. In Psychromonas ingrahamii (strain DSM 17664 / CCUG 51855 / 37), this protein is Endoribonuclease YbeY.